Here is a 140-residue protein sequence, read N- to C-terminus: Fatty acid-binding protein 12 (140 aa).

A fatty acid is bound by residues R107 and 127-129; that span reads RTY.

Belongs to the calycin superfamily. Fatty-acid binding protein (FABP) family. As to expression, expressed in a number of retinoblastoma cell lines.

May play a role in lipid transport. The sequence is that of Fatty acid-binding protein 12 (FABP12) from Homo sapiens (Human).